Reading from the N-terminus, the 239-residue chain is ATP-dependent dethiobiotin synthetase BioD (239 aa).

Residue 15 to 20 coordinates ATP; it reads EIGKTF. Thr-19 provides a ligand contact to Mg(2+). The active site involves Lys-40. ATP contacts are provided by residues Asp-57, 118–121, and 178–179; these read EGVG and NH. The Mg(2+) site is built by Asp-57 and Glu-118.

It belongs to the dethiobiotin synthetase family. Homodimer. Requires Mg(2+) as cofactor.

The protein localises to the cytoplasm. It carries out the reaction (7R,8S)-7,8-diammoniononanoate + CO2 + ATP = (4R,5S)-dethiobiotin + ADP + phosphate + 3 H(+). The protein operates within cofactor biosynthesis; biotin biosynthesis; biotin from 7,8-diaminononanoate: step 1/2. Catalyzes a mechanistically unusual reaction, the ATP-dependent insertion of CO2 between the N7 and N8 nitrogen atoms of 7,8-diaminopelargonic acid (DAPA, also called 7,8-diammoniononanoate) to form a ureido ring. The protein is ATP-dependent dethiobiotin synthetase BioD of Burkholderia cenocepacia (strain HI2424).